Consider the following 913-residue polypeptide: Clumping factor B (913 aa).

Residues 1–44 (MKKRIDYLSNKQNKYSIRRFTVGTTSVIVGATILFGIGNHQAQA) form the signal peptide. The short motif at 15-26 (YSIRRFTVGTTS) is the YSIRK-G/S signaling motif element. 2 stretches are compositionally biased toward polar residues: residues 44–61 (ASEQ…NASA) and 68–95 (MIET…NVDS). Residues 44–192 (ASEQSNDTTQ…QGTSKPSVRT (149 aa)) are disordered. Residues 45–542 (SEQSNDTTQS…GSADGDSAVN (498 aa)) are ligand binding A region. Residues 96 to 119 (TTKPMSTQTSNTTTTEPASTNETP) show a composition bias toward low complexity. The segment covering 120-189 (QPTAIKNQAT…SNAQGTSKPS (70 aa)) has biased composition (polar residues). An MIDAS-like motif motif is present at residues 272-276 (DYSNS). Positions 530–885 (YGGGSADGDS…ETGDKSENTN (356 aa)) are disordered. Over residues 545–555 (DPTPGPPVDPE) the composition is skewed to pro residues. Over residues 556–837 (PSPDPEPEPT…SDSDSDSDSD (282 aa)) the composition is skewed to acidic residues. A compositionally biased stretch (polar residues) spans 841–852 (RVTPPNNEQKAP). The span at 869-882 (HKTDALPETGDKSE) shows a compositional bias: basic and acidic residues. The LPXTG sorting signal signature appears at 874 to 878 (LPETG). Thr-877 is modified (pentaglycyl murein peptidoglycan amidated threonine). Residues 878–913 (GDKSENTNATLFGAMMALLGSLLLFRKRKQDHKEKA) constitute a propeptide, removed by sortase.

This sequence belongs to the serine-aspartate repeat-containing protein (SDr) family. Post-translationally, proteolytically cleaved by aureolysin (aur). This cleavage leads to the inactivation of ClfB.

It localises to the secreted. It is found in the cell wall. Cell surface-associated protein implicated in virulence by promoting bacterial attachment to both alpha- and beta-chains of human fibrinogen and inducing the formation of bacterial clumps. The protein is Clumping factor B (clfB) of Staphylococcus aureus (strain COL).